The sequence spans 804 residues: Exocyst complex component 6 (804 aa).

Belongs to the SEC15 family. The exocyst complex is composed of EXOC1, EXOC2, EXOC3, EXOC4, EXOC5, EXOC6, EXOC7 and EXOC8. Interacts with CNTRL. Interacts with RAB11A in a GTP-dependent manner.

It is found in the cytoplasm. Its subcellular location is the perinuclear region. The protein resides in the cell projection. The protein localises to the growth cone. It localises to the midbody. It is found in the midbody ring. Its function is as follows. Component of the exocyst complex involved in the docking of exocytic vesicles with fusion sites on the plasma membrane. Together with RAB11A, RAB3IP, RAB8A, PARD3, PRKCI, ANXA2, CDC42 and DNMBP promotes transcytosis of PODXL to the apical membrane initiation sites (AMIS), apical surface formation and lumenogenesis. This Homo sapiens (Human) protein is Exocyst complex component 6 (EXOC6).